Here is a 408-residue protein sequence, read N- to C-terminus: Protein CNPPD1 (408 aa).

A helical transmembrane segment spans residues 233 to 253; sequence CLLAVAYVSSVALAVASMAVI.

The protein belongs to the CNPPD1 family.

The protein localises to the membrane. The protein is Protein CNPPD1 (Cnppd1) of Rattus norvegicus (Rat).